Consider the following 60-residue polypeptide: Toxin 4.9.6 (60 aa).

4 disulfide bridges follow: Cys3-Cys22, Cys17-Cys38, Cys40-Cys52, and Cys53-Cys58.

This sequence belongs to the three-finger toxin family. Short-chain subfamily. Orphan group XI sub-subfamily. Expressed by the venom gland.

The protein resides in the secreted. The sequence is that of Toxin 4.9.6 from Dendroaspis viridis (Western green mamba).